A 449-amino-acid polypeptide reads, in one-letter code: Zinc finger and BTB domain-containing protein 14 (449 aa).

The BTB domain occupies 36–102 (CDIAIVVEDV…MYTAKISVKK (67 aa)). Lysine 46 participates in a covalent cross-link: Glycyl lysine isopeptide (Lys-Gly) (interchain with G-Cter in SUMO2). The Nuclear localization signal motif lies at 50–66 (HRCVLAACSTYFKKLFK). The disordered stretch occupies residues 156–194 (ADAQDDDVEEIGDQDDSPSDDTVEGTPPSQEDGKSPTTT). Acidic residues predominate over residues 157–178 (DAQDDDVEEIGDQDDSPSDDTV). Glycyl lysine isopeptide (Lys-Gly) (interchain with G-Cter in SUMO2) cross-links involve residues lysine 203 and lysine 249. C2H2-type zinc fingers lie at residues 277-304 (IACQ…ADRP), 305-332 (FVCE…GYKP), 333-360 (YSCE…NERP), 361-388 (FACH…GEKP), and 389-417 (FVCG…ERKQ). The segment covering 405–417 (KRHENNMHSERKQ) has biased composition (basic and acidic residues). Residues 405–424 (KRHENNMHSERKQVTPSAIQ) form a disordered region.

The protein belongs to the krueppel C2H2-type zinc-finger protein family. As to quaternary structure, interacts with ZBTB21. In terms of tissue distribution, ubiquitous.

The protein resides in the nucleus. Its function is as follows. Transcriptional activator of the dopamine transporter (DAT), binding it's promoter at the consensus sequence 5'-CCTGCACAGTTCACGGA-3'. Binds to 5'-d(GCC)(n)-3' trinucleotide repeats in promoter regions and acts as a repressor of the FMR1 gene. Transcriptional repressor of MYC and thymidine kinase promoters. In Mus musculus (Mouse), this protein is Zinc finger and BTB domain-containing protein 14 (Zbtb14).